The sequence spans 292 residues: Transcription factor HFR1 (292 aa).

Positions 114 to 153 (KRRIQVLSSDDESEEFTREVPSVTRKGSKRRRRDEKMSNK) are disordered. A basic motif; degenerate region spans residues 134-147 (PSVTRKGSKRRRRD). A bHLH domain is found at 134–183 (PSVTRKGSKRRRRDEKMSNKMRKLQQLVPNCHKTDKVSVLDKTIEYMKNL). The span at 139 to 153 (KGSKRRRRDEKMSNK) shows a compositional bias: basic residues. A Nuclear localization signal motif is present at residues 141–148 (SKRRRRDE). The tract at residues 148-183 (EKMSNKMRKLQQLVPNCHKTDKVSVLDKTIEYMKNL) is helix-loop-helix motif.

In terms of assembly, binds to FHY1 and FHL. Forms PHYA/FHY1/HFR1 complex. Homodimer and heterodimer with PIF3. Do not interact alone with either phytochrome A (phyA) or B (phyB), but REP1/PIF3 complex binds to phyA and phyB, preferentially to the Pfr forms. Forms non-functional heterodimer with PRE6, causing liberation of PIF4 from the transcriptionally inactive complex HFR1-PIF4. Repressed when bound to PRE1, PRE2 and PRE4. Mainly expressed in fruits and flowers and, to a lower extent, in leaves, stems, seedlings and roots.

Its subcellular location is the nucleus. Its function is as follows. Atypical bHLH transcription factor that regulates photomorphogenesis through modulation of phytochrome (e.g. PHYA) and cryptochrome signalings. Suppresses the transcriptional regulation activity of PIF4 by forming non-DNA-binding heterodimer. This chain is Transcription factor HFR1, found in Arabidopsis thaliana (Mouse-ear cress).